The primary structure comprises 281 residues: Small ribosomal subunit protein uS3 (281 aa).

Residues 38–106 (IRRLLSTGLE…QVQLNILEVK (69 aa)) enclose the KH type-2 domain. Positions 218–281 (APAGAERARR…VTHEPQIAES (64 aa)) are disordered. Over residues 238–256 (SGAAGTTVTGTDAGRAVGG) the composition is skewed to low complexity.

The protein belongs to the universal ribosomal protein uS3 family. In terms of assembly, part of the 30S ribosomal subunit. Forms a tight complex with proteins S10 and S14.

Its function is as follows. Binds the lower part of the 30S subunit head. Binds mRNA in the 70S ribosome, positioning it for translation. This is Small ribosomal subunit protein uS3 from Mycobacterium leprae (strain Br4923).